The chain runs to 86 residues: Small ribosomal subunit protein uS15 (86 aa).

The protein belongs to the universal ribosomal protein uS15 family. In terms of assembly, part of the 30S ribosomal subunit. Forms a bridge to the 50S subunit in the 70S ribosome, contacting the 23S rRNA.

Its function is as follows. One of the primary rRNA binding proteins, it binds directly to 16S rRNA where it helps nucleate assembly of the platform of the 30S subunit by binding and bridging several RNA helices of the 16S rRNA. Forms an intersubunit bridge (bridge B4) with the 23S rRNA of the 50S subunit in the ribosome. The protein is Small ribosomal subunit protein uS15 of Vesicomyosocius okutanii subsp. Calyptogena okutanii (strain HA).